A 91-amino-acid polypeptide reads, in one-letter code: uncharacterized protein (91 aa).

A run of 2 helical transmembrane segments spans residues 22–42 (WPVI…AFVV) and 53–73 (VAGL…LAAA).

The protein resides in the cell membrane. This is an uncharacterized protein from Mycobacterium bovis (strain ATCC BAA-935 / AF2122/97).